A 390-amino-acid polypeptide reads, in one-letter code: 2-oxoisovalerate dehydrogenase subunit beta, mitochondrial (390 aa).

The transit peptide at 1–48 (MAAVAARAGGLLRLGAAGAERRRRGLRCAALVQGFLQPAVDDASQKRR) directs the protein to the mitochondrion. Tyr-150 is a binding site for thiamine diphosphate. Gly-176, Leu-178, Thr-179, Cys-226, and Asp-229 together coordinate K(+). N6-acetyllysine is present on Lys-230. Asn-231 lines the K(+) pocket. Lys-239 carries the N6-acetyllysine modification.

Heterotetramer of 2 alpha/BCKDHA and 2 beta chains/BCKDHB that forms the branched-chain alpha-keto acid decarboxylase (E1) component of the BCKD complex. The branched-chain alpha-ketoacid dehydrogenase is a large complex composed of three major building blocks E1, E2 and E3. It is organized around E2, a 24-meric cubic core composed of DBT, to which are associated 6 to 12 copies of E1, and approximately 6 copies of the dehydrogenase E3, a DLD dimer. Thiamine diphosphate is required as a cofactor.

The protein resides in the mitochondrion matrix. The catalysed reaction is N(6)-[(R)-lipoyl]-L-lysyl-[protein] + 3-methyl-2-oxobutanoate + H(+) = N(6)-[(R)-S(8)-2-methylpropanoyldihydrolipoyl]-L-lysyl-[protein] + CO2. Its function is as follows. Together with BCKDHA forms the heterotetrameric E1 subunit of the mitochondrial branched-chain alpha-ketoacid dehydrogenase (BCKD) complex. The BCKD complex catalyzes the multi-step oxidative decarboxylation of alpha-ketoacids derived from the branched-chain amino-acids valine, leucine and isoleucine producing CO2 and acyl-CoA which is subsequently utilized to produce energy. The E1 subunit catalyzes the first step with the decarboxylation of the alpha-ketoacid forming an enzyme-product intermediate. A reductive acylation mediated by the lipoylamide cofactor of E2 extracts the acyl group from the E1 active site for the next step of the reaction. The polypeptide is 2-oxoisovalerate dehydrogenase subunit beta, mitochondrial (Rattus norvegicus (Rat)).